The primary structure comprises 690 residues: Eukaryotic translation initiation factor 3 subunit B (690 aa).

Positions 1–11 are enriched in basic and acidic residues; sequence MAKKKSEEHSG. A disordered region spans residues 1 to 36; the sequence is MAKKKSEEHSGADANDSDYQEEPNFEDPPGFVDNIS. Residues 15-25 show a composition bias toward acidic residues; it reads NDSDYQEEPNF. The RRM domain occupies 57–141; the sequence is SVVVVDNIPK…HTFAVNLFTD (85 aa). WD repeat units lie at residues 207–246, 293–331, 334–369, 442–484, and 530–575; these read TRER…KIQK, DGMS…LLDL, IKIP…TLME, EIRE…KPSL, and PDHF…IKRT. Positions 595-645 form a coiled coil; it reads EEKQKEIKKNLKKYYAAFEQKDRLRLTRASKELLEKRSQLRETFMEYRNKR.

Belongs to the eIF-3 subunit B family. Component of the eukaryotic translation initiation factor 3 (eIF-3) complex. The eIF-3 complex interacts with pix. Interacts with mxt.

Its subcellular location is the cytoplasm. Its function is as follows. RNA-binding component of the eukaryotic translation initiation factor 3 (eIF-3) complex, which is involved in protein synthesis of a specialized repertoire of mRNAs and, together with other initiation factors, stimulates binding of mRNA and methionyl-tRNAi to the 40S ribosome. The eIF-3 complex specifically targets and initiates translation of a subset of mRNAs involved in cell proliferation. In Drosophila erecta (Fruit fly), this protein is Eukaryotic translation initiation factor 3 subunit B.